A 371-amino-acid polypeptide reads, in one-letter code: 2-oxoadipate dioxygenase/decarboxylase, chloroplastic (371 aa).

The N-terminal 50 residues, 1–50 (MISLHSSAIKASLYGSFPSSLRSTLSVSFSAGSLIRLPSVGKRNLSVVVS), are a transit peptide targeting the chloroplast. Positions 113 and 117 each coordinate 2-oxoadipate. Histidine 113 provides a ligand contact to Fe(2+). A Fe(2+)-binding site is contributed by histidine 250. Residues glutamine 296 and tyrosine 320 each coordinate 2-oxoadipate. Glutamate 322 contacts Fe(2+).

This sequence belongs to the 2-oxoadipate dioxygenase/decarboxylase family. It depends on Fe(2+) as a cofactor.

It localises to the plastid. The protein resides in the chloroplast. It catalyses the reaction 2-oxoadipate + O2 = (R)-2-hydroxyglutarate + CO2. It functions in the pathway amino-acid degradation. Functionally, catalyzes the decarboxylation and hydroxylation of 2-oxoadipate (2OA) to form D-2-hydroxyglutarate (D-2-HGA). Is involved in a D-lysine catabolic pathway. This chain is 2-oxoadipate dioxygenase/decarboxylase, chloroplastic, found in Arabidopsis thaliana (Mouse-ear cress).